Reading from the N-terminus, the 204-residue chain is Small ribosomal subunit protein uS4 (204 aa).

Residues 22 to 43 (SGKELARRPYAPGDHGNTGRRP) are disordered. Residues 94-154 (TRLDSVVFRL…ERSKKIVPIL (61 aa)) enclose the S4 RNA-binding domain.

This sequence belongs to the universal ribosomal protein uS4 family. In terms of assembly, part of the 30S ribosomal subunit. Contacts protein S5. The interaction surface between S4 and S5 is involved in control of translational fidelity.

One of the primary rRNA binding proteins, it binds directly to 16S rRNA where it nucleates assembly of the body of the 30S subunit. Functionally, with S5 and S12 plays an important role in translational accuracy. The chain is Small ribosomal subunit protein uS4 from Oenococcus oeni (strain ATCC BAA-331 / PSU-1).